The chain runs to 356 residues: MRGTYCVTLWGGVFAALVAGCASERMIVAYRGAAGYVPEHTFASKVLAFAQGADYLQQDVVLSKDNQLIVAQSHILDNMTDVAEKFPRRQRADGHFYVIDFTVEELSLLRATNSFYTRGKRHTPVYGQRFPLWKPGFRLHTFEEELQFIRGLEQTTGKKIGIYSEIKVPWFHHQEGKDIAALTLALLKKYGYQSRSDLVYVQTYDFNELKRIKRELLPKYEMNVKLIQRVAYTDQRETQEKDSRGKWINYNYNWMFEPGGMQKIAKYADGVGPDWRMLIENEWSKVGAVRLSPMVSAIQDAKLECHVHTVRKETLPSYARTMDEMFSILFKQTGANVVLTDFPDLGVKFLGKPARY.

An N-terminal signal peptide occupies residues 1–20 (MRGTYCVTLWGGVFAALVAG). A lipid anchor (N-palmitoyl cysteine) is attached at Cys21. The S-diacylglycerol cysteine moiety is linked to residue Cys21. The GP-PDE domain maps to 25–314 (RMIVAYRGAA…CHVHTVRKET (290 aa)).

Belongs to the glycerophosphoryl diester phosphodiesterase family. In terms of processing, palmitoylated upon expression of a fusion protein with first 40 residues fused to PhoA in E.coli.

It is found in the cell inner membrane. The enzyme catalyses a sn-glycero-3-phosphodiester + H2O = an alcohol + sn-glycerol 3-phosphate + H(+). In terms of biological role, glycerophosphoryl diester phosphodiesterase hydrolyzes deacylated phospholipids to G3P and the corresponding alcohols. Its function is as follows. Binds human IgA, IgD and the Fc portion of IgG but not IgM, which may contribute to evasion of the human immune system. This is Glycerophosphodiester phosphodiesterase (glpQ) from Treponema pallidum (strain Nichols).